The following is a 138-amino-acid chain: Small ribosomal subunit protein bS18m (138 aa).

This sequence belongs to the bacterial ribosomal protein bS18 family. Component of the mitochondrial small ribosomal subunit. Mature mitochondrial ribosomes consist of a small (37S) and a large (54S) subunit. The 37S subunit contains at least 33 different proteins and 1 molecule of RNA (15S). The 54S subunit contains at least 45 different proteins and 1 molecule of RNA (21S).

The protein resides in the mitochondrion. The protein is Small ribosomal subunit protein bS18m (RSM18) of Saccharomyces cerevisiae (strain RM11-1a) (Baker's yeast).